Consider the following 278-residue polypeptide: Ribosomal RNA small subunit methyltransferase A (278 aa).

Asn-28, Leu-30, Gly-55, Glu-77, Asp-103, and Asn-122 together coordinate S-adenosyl-L-methionine.

It belongs to the class I-like SAM-binding methyltransferase superfamily. rRNA adenine N(6)-methyltransferase family. RsmA subfamily.

The protein resides in the cytoplasm. It carries out the reaction adenosine(1518)/adenosine(1519) in 16S rRNA + 4 S-adenosyl-L-methionine = N(6)-dimethyladenosine(1518)/N(6)-dimethyladenosine(1519) in 16S rRNA + 4 S-adenosyl-L-homocysteine + 4 H(+). Its function is as follows. Specifically dimethylates two adjacent adenosines (A1518 and A1519) in the loop of a conserved hairpin near the 3'-end of 16S rRNA in the 30S particle. May play a critical role in biogenesis of 30S subunits. The polypeptide is Ribosomal RNA small subunit methyltransferase A (Cereibacter sphaeroides (strain ATCC 17029 / ATH 2.4.9) (Rhodobacter sphaeroides)).